The following is a 60-amino-acid chain: Toxin FS-2 (60 aa).

4 disulfide bridges follow: Cys3/Cys22, Cys17/Cys39, Cys41/Cys52, and Cys53/Cys58. The interval 41–48 is important for binding to L-type calcium channels; it reads CPTAMWPY.

This sequence belongs to the three-finger toxin family. Short-chain subfamily. L-type calcium blocker sub-subfamily. Expressed by the venom gland.

It localises to the secreted. Specific blocker of the voltage-dependent L-type calcium channel (Cav1/CACNA1). Inhibits cardiac contractions. The chain is Toxin FS-2 from Dendroaspis polylepis polylepis (Black mamba).